The following is a 294-amino-acid chain: Uracil-DNA glycosylase (294 aa).

Residue aspartate 139 is the Proton acceptor of the active site.

This sequence belongs to the uracil-DNA glycosylase (UDG) superfamily. UNG family.

The protein resides in the host nucleus. It catalyses the reaction Hydrolyzes single-stranded DNA or mismatched double-stranded DNA and polynucleotides, releasing free uracil.. Excises uracil residues from the DNA which can arise as a result of misincorporation of dUMP residues by DNA polymerase or deamination of cytosines. Therefore may reduce deleterious uracil incorporation into the viral genome, particularly in terminally differentiated cells which lack DNA repair enzymes. This Human herpesvirus 2 (strain 333) (HHV-2) protein is Uracil-DNA glycosylase (UL2).